The chain runs to 406 residues: MQLFLLLCLVLLSPQGASLHRHHPREMKKRVEDLHVGATVAPSSRRDFTFDLYRALASAAPSQSIFFSPVSISMSLAMLSLGAGSSTKMQILEGLGLNLQKSSEKELHRGFQQLLQELNQPRDGFQLSLGNALFTDLVVDLQDTFVSAMKTLYLADTFPTNFRDSAGAMKQINDYVAKQTKGKIVDLLKNLDSNAVVIMVNYIFFKAKWETSFNHKGTQEQDFYVTSETVVRVPMMSREDQYHYLLDRNLSCRVVGVPYQGNATALFILPSEGKMQQVENGLSEKTLRKWLKMFKKRQLELYLPKFSIEGSYQLEKVLPSLGISNVFTSHADLSGISNHSNIQVSEMVHKAVVEVDESGTRAAAATGTIFTFRSARLNSQRLVFNRPFLMFIVDNNILFLGKVNRP.

The signal sequence occupies residues 1-19; it reads MQLFLLLCLVLLSPQGASL. The propeptide at 20–25 is removed in mature form; it reads HRHHPR. O-linked (GalNAc...) threonine glycosylation is present at Thr-39. N-linked (GlcNAc...) asparagine glycosylation is found at Asn-249, Asn-262, and Asn-338.

It belongs to the serpin family. In terms of assembly, forms protease inhibiting heterodimers in extracellular body fluids with serine proteases such as activated protein C/coagulation factor V/F5, acrosin/ACR, chymotrypsinogen B/CTRB1, prothrombin/F2, factor Xa/F10, factor XI/F11, kallikrein/KLKB1, tissue kallikrein, trypsin/PRSS1, prostate specific antigen/KLK3, tissue plasminogen activator/PLAT and urinary plasminogen activator/PLAU. Forms membrane-anchored serine proteases inhibiting heterodimers with TMPRSS7 and TMPRSS11E. Interacts with SEMG2. In terms of processing, N- and O-glycosylated. N-glycosylation consists of a mixture of sialylated bi- (including sialyl-Lewis X epitopes), tri- and tetra-antennary complex-type chains; affects the maximal heparin- and thrombomodulin-enhanced rates of thrombin inhibition. O-glycosylated with core 1 or possibly core 8 glycans. Further modified with 2 sialic acid residues. Proteolytically cleaved. Inhibition of proteases is accompanied by formation of a stable enzyme-inhibitor complex and by degradation of the serpin to lower molecular weight derivatives. Proteolytically cleaved at the N-terminus; inhibits slightly the heparin- and thrombomodulin-enhanced rates of thrombin inhibition. As to expression, predominantly expressed in the epithelium of seminal vesicles. Expressed in the proximal tubular epithelium of the kidney. Expressed in the superficial and more differentiated epidermal keratinocytes of the skin. Expressed in megakaryocytes and platelets. Expressed poorly in kidney tumor cells compared to non tumor kidney tissues. Expressed in spermatozoa. Present in very high concentration in seminal plasma. Present in high concentration in plasma, synovial and Graaf follicle fluids. Present in low concentration in breast milk and in amniotic fluids. Present in very low concentration in urine, cerebrospinal fluids, saliva and tears (at protein level). Strongly expressed in liver. Expressed in kidney, spleen, pancreas, skeletal muscle, heart, testes, ovary, interstitial Leydig cells, epididymal glands, seminal vesicles and prostate.

It is found in the secreted. The protein resides in the extracellular space. With respect to regulation, its inhibitory activity is greatly enhanced in the presence of glycosaminoglycans, heparin, thrombomodulin and phospholipids vesicles. Its function is as follows. Heparin-dependent serine protease inhibitor acting in body fluids and secretions. Inactivates serine proteases by binding irreversibly to their serine activation site. Involved in the regulation of intravascular and extravascular proteolytic activities. Plays hemostatic roles in the blood plasma. Acts as a procoagulant and pro-inflammatory factor by inhibiting the anticoagulant activated protein C factor as well as the generation of activated protein C factor by the thrombin/thrombomodulin complex. Acts as an anticoagulant factor by inhibiting blood coagulation factors like prothrombin, factor XI, factor Xa, plasma kallikrein and fibrinolytic enzymes such as tissue- and urinary-type plasminogen activators. In seminal plasma, inactivates several serine proteases implicated in the reproductive system. Inhibits the serpin acrosin; indirectly protects component of the male genital tract from being degraded by excessive released acrosin. Inhibits tissue- and urinary-type plasminogen activator, prostate-specific antigen and kallikrein activities; has a control on the sperm motility and fertilization. Inhibits the activated protein C-catalyzed degradation of SEMG1 and SEMG2; regulates the degradation of semenogelin during the process of transfer of spermatozoa from the male reproductive tract into the female tract. In urine, inhibits urinary-type plasminogen activator and kallikrein activities. Inactivates membrane-anchored serine proteases activities such as MPRSS7 and TMPRSS11E. Inhibits urinary-type plasminogen activator-dependent tumor cell invasion and metastasis. May also play a non-inhibitory role in seminal plasma and urine as a hydrophobic hormone carrier by its binding to retinoic acid. The protein is Plasma serine protease inhibitor (SERPINA5) of Homo sapiens (Human).